A 337-amino-acid polypeptide reads, in one-letter code: tRNA N6-adenosine threonylcarbamoyltransferase (337 aa).

2 residues coordinate Fe cation: H111 and H115. Substrate-binding positions include 134-138, D167, G180, and N272; that span reads LVSGG. D300 contributes to the Fe cation binding site.

It belongs to the KAE1 / TsaD family. Fe(2+) is required as a cofactor.

The protein resides in the cytoplasm. The enzyme catalyses L-threonylcarbamoyladenylate + adenosine(37) in tRNA = N(6)-L-threonylcarbamoyladenosine(37) in tRNA + AMP + H(+). Its function is as follows. Required for the formation of a threonylcarbamoyl group on adenosine at position 37 (t(6)A37) in tRNAs that read codons beginning with adenine. Is involved in the transfer of the threonylcarbamoyl moiety of threonylcarbamoyl-AMP (TC-AMP) to the N6 group of A37, together with TsaE and TsaB. TsaD likely plays a direct catalytic role in this reaction. The protein is tRNA N6-adenosine threonylcarbamoyltransferase of Escherichia coli (strain K12 / MC4100 / BW2952).